A 345-amino-acid chain; its full sequence is Olfactory receptor 11G2 (345 aa).

Residues 1–62 lie on the Extracellular side of the membrane; that stretch reads MHFLSQNDLN…LGFPCPREGQ (62 aa). Asparagine 43 carries N-linked (GlcNAc...) asparagine glycosylation. A helical transmembrane segment spans residues 63–83; the sequence is ILLFVLFTVVYLLTLMGNGSI. The Cytoplasmic segment spans residues 84-92; that stretch reads ICAVHWDQR. Residues 93–113 traverse the membrane as a helical segment; that stretch reads LHAPMYILLANFSFLEICYVT. Topologically, residues 114 to 135 are extracellular; sequence STVPSMLANFLSDTKIISFSGC. A disulfide bond links cysteine 135 and cysteine 217. A helical transmembrane segment spans residues 136–156; that stretch reads FLQFYFFFSLGSTECFFLAVM. Residues 157-181 are Cytoplasmic-facing; sequence AFDRYLAICRPLRYPTIMTRRLCTN. A helical transmembrane segment spans residues 182 to 202; the sequence is LVVNCWVLGFIWFLIPIVNIS. At 203–241 the chain is on the extracellular side; it reads QMSFCGSRIIDHFLCDPAPLLTLTCKKGPVIELVFSVLS. Residues 242-264 form a helical membrane-spanning segment; that stretch reads PLPVFMLFLFIVGSYALVVRAVL. The Cytoplasmic segment spans residues 265–275; the sequence is RVPSAAGRRKA. The chain crosses the membrane as a helical span at residues 276 to 296; the sequence is FSTCGSHLAVVSLFYGSVLVM. Topologically, residues 297-309 are extracellular; sequence YGSPPSKNEAGKQ. Residues 310–330 form a helical membrane-spanning segment; it reads KTVTLFYSVVTPLLNPVIYSL. The Cytoplasmic segment spans residues 331-345; that stretch reads RNKDMRKALKKFWGT.

It belongs to the G-protein coupled receptor 1 family.

The protein resides in the cell membrane. Functionally, odorant receptor. The sequence is that of Olfactory receptor 11G2 (OR11G2) from Homo sapiens (Human).